Reading from the N-terminus, the 206-residue chain is Small ribosomal subunit protein uS4 (206 aa).

The 61-residue stretch at 96-156 (SRLDNVVYRM…EKSKNQLRIQ (61 aa)) folds into the S4 RNA-binding domain.

It belongs to the universal ribosomal protein uS4 family. Part of the 30S ribosomal subunit. Contacts protein S5. The interaction surface between S4 and S5 is involved in control of translational fidelity.

Its function is as follows. One of the primary rRNA binding proteins, it binds directly to 16S rRNA where it nucleates assembly of the body of the 30S subunit. In terms of biological role, with S5 and S12 plays an important role in translational accuracy. The polypeptide is Small ribosomal subunit protein uS4 (Teredinibacter turnerae (strain ATCC 39867 / T7901)).